Here is a 320-residue protein sequence, read N- to C-terminus: tRNA N6-adenosine threonylcarbamoyltransferase (320 aa).

Fe cation-binding residues include H114 and H118. Substrate-binding positions include 136–140 (VVSGG), D169, G182, D186, and N273. Residue D297 participates in Fe cation binding.

Belongs to the KAE1 / TsaD family. Requires Fe(2+) as cofactor.

The protein resides in the cytoplasm. The catalysed reaction is L-threonylcarbamoyladenylate + adenosine(37) in tRNA = N(6)-L-threonylcarbamoyladenosine(37) in tRNA + AMP + H(+). Functionally, required for the formation of a threonylcarbamoyl group on adenosine at position 37 (t(6)A37) in tRNAs that read codons beginning with adenine. Is involved in the transfer of the threonylcarbamoyl moiety of threonylcarbamoyl-AMP (TC-AMP) to the N6 group of A37, together with TsaE and TsaB. TsaD likely plays a direct catalytic role in this reaction. In Ureaplasma urealyticum serovar 10 (strain ATCC 33699 / Western), this protein is tRNA N6-adenosine threonylcarbamoyltransferase.